The primary structure comprises 96 residues: Small ribosomal subunit protein bS6 (96 aa).

It belongs to the bacterial ribosomal protein bS6 family.

Its function is as follows. Binds together with bS18 to 16S ribosomal RNA. The polypeptide is Small ribosomal subunit protein bS6 (Salinispora tropica (strain ATCC BAA-916 / DSM 44818 / JCM 13857 / NBRC 105044 / CNB-440)).